The primary structure comprises 162 residues: MKGFTATLFLWTLIFPSCSGGGGGKAWPTHVVCSDSGLEVLYQSCDPLQDFGFSVEKCSKQLKSNINIRFGIILREDIKELFLDLALMSQGSSVLNFSYPICEAALPKFSFCGRRKGEQIYYAGPVNNPEFTIPQGEYQVLLELYTEKRSTVACANATIMCS.

A signal peptide spans 1–20 (MKGFTATLFLWTLIFPSCSG). 3 cysteine pairs are disulfide-bonded: cysteine 33/cysteine 58, cysteine 45/cysteine 154, and cysteine 102/cysteine 112. N-linked (GlcNAc...) asparagine glycosylation occurs at asparagine 96. Asparagine 156 is a glycosylation site (N-linked (GlcNAc...) asparagine).

M-shaped tetramer of two CD180-LY86 heterodimers. Highly expressed in B-cells, monocytes and tonsil.

Its subcellular location is the secreted. The protein resides in the extracellular space. Its function is as follows. May cooperate with CD180 and TLR4 to mediate the innate immune response to bacterial lipopolysaccharide (LPS) and cytokine production. Important for efficient CD180 cell surface expression. This is Lymphocyte antigen 86 (LY86) from Homo sapiens (Human).